The sequence spans 460 residues: GTPase Der (460 aa).

2 EngA-type G domains span residues 2–164 (KKVI…DDEI) and 199–370 (IKVG…ANFT). GTP is bound by residues 8–15 (GRPNVGKS), 55–59 (DSGGL), 116–119 (NKID), 205–212 (GRVNVGKS), 252–256 (DTAGI), and 316–319 (NKWD). In terms of domain architecture, KH-like spans 371–454 (QKIATSKLND…PVILLPRKRG (84 aa)).

This sequence belongs to the TRAFAC class TrmE-Era-EngA-EngB-Septin-like GTPase superfamily. EngA (Der) GTPase family. Associates with the 50S ribosomal subunit.

Its function is as follows. GTPase that plays an essential role in the late steps of ribosome biogenesis. The protein is GTPase Der of Campylobacter hominis (strain ATCC BAA-381 / DSM 21671 / CCUG 45161 / LMG 19568 / NCTC 13146 / CH001A).